The following is a 159-amino-acid chain: Cyclic pyranopterin monophosphate synthase (159 aa).

Residues 75–77 (LCH) and 113–114 (ME) each bind substrate. Aspartate 128 is a catalytic residue.

The protein belongs to the MoaC family. As to quaternary structure, homohexamer; trimer of dimers.

It catalyses the reaction (8S)-3',8-cyclo-7,8-dihydroguanosine 5'-triphosphate = cyclic pyranopterin phosphate + diphosphate. It participates in cofactor biosynthesis; molybdopterin biosynthesis. Its function is as follows. Catalyzes the conversion of (8S)-3',8-cyclo-7,8-dihydroguanosine 5'-triphosphate to cyclic pyranopterin monophosphate (cPMP). In Cereibacter sphaeroides (strain ATCC 17023 / DSM 158 / JCM 6121 / CCUG 31486 / LMG 2827 / NBRC 12203 / NCIMB 8253 / ATH 2.4.1.) (Rhodobacter sphaeroides), this protein is Cyclic pyranopterin monophosphate synthase.